The chain runs to 567 residues: Hexose transporter HXT16 (567 aa).

Positions 1–19 (MASEQSSPEINADNLNSSA) are enriched in polar residues. Positions 1 to 32 (MASEQSSPEINADNLNSSAADVHVQPPGEKEW) are disordered. Residues 1-55 (MASEQSSPEINADNLNSSAADVHVQPPGEKEWSDGFYDKEVINGNTPDAPKRGFL) are Cytoplasmic-facing. Residues 56-76 (GYLIIYLLCYPVSFGGFLPGW) traverse the membrane as a helical segment. The Extracellular portion of the chain corresponds to 77–112 (DSGITAGFINMDNFKMNFGSYKHSTGEYYLSNVRMG). The chain crosses the membrane as a helical span at residues 113-133 (LLVAMFSVGCSIGGVAFARLA). The Cytoplasmic portion of the chain corresponds to 134-139 (DTLGRR). The helical transmembrane segment at 140–160 (LAIVIVVLVYMVGAIIQISSN) threads the bilayer. At 161–170 (HKWYQYFVGK) the chain is on the extracellular side. A helical membrane pass occupies residues 171–191 (IIYGLGAGGCSVLCPMLLSEI). Residues 192–197 (APTDLR) lie on the Cytoplasmic side of the membrane. Residues 198-218 (GGLVSLYQLNMTFGIFLGYCS) traverse the membrane as a helical segment. Over 219 to 232 (VYGTRKYSNTAQWR) the chain is Extracellular. The helical transmembrane segment at 233–253 (IPVGLCFLWALIIIVGMLLVP) threads the bilayer. Over 254-336 (ESPRYLIECE…VQTFLQLTGE (83 aa)) the chain is Cytoplasmic. A helical membrane pass occupies residues 337–353 (NYFFFYGTTIFKSVGLT). Topologically, residues 354-359 (DGFETS) are extracellular. Residues 360–377 (IVLGTVNFFSTIIAVMVV) traverse the membrane as a helical segment. Topologically, residues 378 to 384 (DKIGRRK) are cytoplasmic. Residues 385–405 (CLLFGAASMMACMVIFASIGV) form a helical membrane-spanning segment. Residues 406 to 427 (KCLYPHGQDGPSSKGAGNAMIV) lie on the Extracellular side of the membrane. The chain crosses the membrane as a helical span at residues 428 to 448 (FTCFYIFCFATTWAPVAYIVV). Residues 449-465 (AESFPSKVKSKAMSIST) lie on the Cytoplasmic side of the membrane. Residues 466-486 (AFNWLWQFLIGFFTPFITGSI) traverse the membrane as a helical segment. Residue His487 is a topological domain, extracellular. A helical transmembrane segment spans residues 488 to 508 (FYYGYVFVGCLVAMFLYVFFF). The Cytoplasmic segment spans residues 509–567 (LPETIGLSLEETQLLYEEGIKPWKSASWVPPSRRGASSRETEAKKKSWKEVLKFPKSFN). The tract at residues 533–555 (SASWVPPSRRGASSRETEAKKKS) is disordered. Over residues 545–555 (SSRETEAKKKS) the composition is skewed to basic and acidic residues.

This sequence belongs to the major facilitator superfamily. Sugar transporter (TC 2.A.1.1) family.

The protein resides in the membrane. Functionally, probable glucose transporter. The protein is Hexose transporter HXT16 (HXT16) of Saccharomyces cerevisiae (strain ATCC 204508 / S288c) (Baker's yeast).